Consider the following 239-residue polypeptide: MKFTVISLFPAIIKPFFENSIMKKAINKGIVSFELIDVRDFSKDKHKRCDDLSYGGGAGMVLKAEPMSFALEHVEATKKTTIFLSPSGIKYTQELAYSLSKKEEIVIICGRYEGIDQRIIDLYVDFEISIGDYVLSSGEIAALVLIDSVYRLLDGVINPNSLLEESFGMKNGLLEYPHYTRPYNFMGIKVPEVLVSGHHENIKNWRLFKAREKTKKNRYDLYLKYLEIIGEDNGFDKKN.

S-adenosyl-L-methionine-binding positions include G110 and I130–L135.

It belongs to the RNA methyltransferase TrmD family. Homodimer.

It localises to the cytoplasm. The catalysed reaction is guanosine(37) in tRNA + S-adenosyl-L-methionine = N(1)-methylguanosine(37) in tRNA + S-adenosyl-L-homocysteine + H(+). Functionally, specifically methylates guanosine-37 in various tRNAs. The polypeptide is tRNA (guanine-N(1)-)-methyltransferase (Borrelia garinii subsp. bavariensis (strain ATCC BAA-2496 / DSM 23469 / PBi) (Borreliella bavariensis)).